Consider the following 920-residue polypeptide: Urea transporter 2 (920 aa).

Residues 25 to 57 (FTSPSWPSTSPDTHPALPLLEMPEEKDLRSSNE) form a disordered region. Over residues 26–39 (TSPSWPSTSPDTHP) the composition is skewed to low complexity. Over residues 47 to 57 (PEEKDLRSSNE) the composition is skewed to basic and acidic residues. Helical transmembrane passes span 151 to 170 (WWTITGGLGTVVSTLTALAL), 176 to 196 (AIASGLHGYNGMLVGLLMAVF), 204 to 224 (WWLLFPVTFTAMSCPVLSSAL), 233 to 253 (LPVFTLPFNIAVTLYLAATGH), 272 to 291 (ITWTEMEMPLLLQAIPVGVG), 302 to 322 (GGVFLVALFISSPLICLHAAI), 346 to 366 (WSYNCVLSCIAIGGMFYALTW), 370 to 390 (LLALICALFCAYMEAAISNIM), and 392 to 412 (VVGVPPGTWAFCLATIIFLLL). The interval 446–467 (EKAPSGGGGEHPPTAGPKVEEG) is disordered. S477 is modified (phosphoserine). The next 4 membrane-spanning stretches (helical) occupy residues 600-620 (GILIILGLFIQNPWWAISGCL), 638-658 (AIAAGFHGYNGVLVGLLMAVF), 666-686 (WWLLLPVIIMSMSCPILSSAL), and 695-715 (LPVFTLPFNITVTLYLAATGH). N733 carries N-linked (GlcNAc...) asparagine glycosylation. The next 4 helical transmembrane spans lie at 764–784 (GGIFLIALFISSPLICLHAAI), 803–823 (IYFGLCGFNSTLACIAIGGMF), 832–852 (LLAIACALFAAYLGAALANML), and 854–874 (VFGLPPCTWPFCLSALTFLLL).

It belongs to the urea transporter family. In terms of assembly, interacts with SNAPIN which enhances its urea transport activity. In terms of tissue distribution, epressed in the inner medulla of the kidney (at protein level). As to expression, expressed in the kidney.

Its subcellular location is the apical cell membrane. The protein localises to the cell membrane. It carries out the reaction urea(in) = urea(out). Inhibited by phloretin. Mediates the transport of urea driven by a concentration gradient across the cell membrane of the renal inner medullary collecting duct which is critical to the urinary concentrating mechanism. In terms of biological role, mediates the transport of urea driven by a concentration gradient across the cell membrane of the kidney inner medullary collecting duct which is critical to the urinary concentrating mechanism. This Homo sapiens (Human) protein is Urea transporter 2 (SLC14A2).